The sequence spans 394 residues: Protein NDRG1 (394 aa).

The residue at position 2 (Ser2) is an N-acetylserine. Phosphoserine is present on residues Ser2, Ser319, and Ser326. The disordered stretch occupies residues 325-394; the sequence is RSRTASGSSV…AGPKSMEVSC (70 aa). Positions 327–339 are enriched in polar residues; the sequence is RTASGSSVTSLDG. Thr328 is subject to Phosphothreonine; by SGK1. 2 positions are modified to phosphoserine; by SGK1: Ser330 and Ser332. Position 333 is a phosphoserine (Ser333). Thr335 carries the post-translational modification Phosphothreonine. Ser336 carries the post-translational modification Phosphoserine. Repeat copies occupy residues 339–348, 349–358, and 359–368. A 3 X 10 AA tandem repeats of G-[PST]-R-S-R-S-H-T-S-E region spans residues 339–368; the sequence is GTRSRSHTSEGTRSRSHTSEGTRSRSHTSE. A Phosphothreonine modification is found at Thr340. Ser342 carries the post-translational modification Phosphoserine. The segment covering 345 to 371 has biased composition (basic and acidic residues); sequence HTSEGTRSRSHTSEGTRSRSHTSEGAH. Thr346 carries the post-translational modification Phosphothreonine; by SGK1. Ser352 is modified (phosphoserine). The residue at position 356 (Thr356) is a Phosphothreonine; by SGK1. Residues Ser362 and Ser364 each carry the phosphoserine modification. Phosphothreonine is present on residues Thr366 and Thr375.

The protein belongs to the NDRG family. Interacts with RAB4A (membrane-bound form); the interaction involves NDRG1 in vesicular recycling ofCDH1. Interacts with APOA1, APOA2, PRA1 and RTN1. Post-translationally, under stress conditions, phosphorylated in the C-terminal on many serine and threonine residues. Phosphorylated in vitro by PKA. Phosphorylation enhanced by increased intracellular cAMP levels. Homocysteine induces dephosphorylation. Phosphorylation by SGK1 is cell cycle dependent.

Its subcellular location is the cytoplasm. It is found in the cytosol. The protein localises to the cytoskeleton. It localises to the microtubule organizing center. The protein resides in the centrosome. Its subcellular location is the nucleus. It is found in the cell membrane. Its function is as follows. Stress-responsive protein involved in hormone responses, cell growth, and differentiation. Acts as a tumor suppressor in many cell types. Necessary but not sufficient for p53/TP53-mediated caspase activation and apoptosis. Has a role in cell trafficking notably of the Schwann cell and is necessary for the maintenance and development of the peripheral nerve myelin sheath. Required for vesicular recycling of CDH1 and TF. May also function in lipid trafficking. Protects cells from spindle disruption damage. Functions in p53/TP53-dependent mitotic spindle checkpoint. Regulates microtubule dynamics and maintains euploidy. The sequence is that of Protein NDRG1 (Ndrg1) from Macaca fascicularis (Crab-eating macaque).